We begin with the raw amino-acid sequence, 254 residues long: Precorrin-3B C(17)-methyltransferase (254 aa).

The protein belongs to the precorrin methyltransferase family.

The enzyme catalyses precorrin-3B + S-adenosyl-L-methionine = precorrin-4 + S-adenosyl-L-homocysteine + 3 H(+). It functions in the pathway cofactor biosynthesis; adenosylcobalamin biosynthesis; cob(II)yrinate a,c-diamide from precorrin-2 (aerobic route): step 3/10. Its function is as follows. Methyltransferase that catalyzes the methylation of C-17 in precorrin-3B to form precorrin-4. This is Precorrin-3B C(17)-methyltransferase (cobJ) from Sinorhizobium sp.